A 78-amino-acid chain; its full sequence is D-alanyl carrier protein (78 aa).

In terms of domain architecture, Carrier spans methionine 1–arginine 78. Serine 36 carries the post-translational modification O-(pantetheine 4'-phosphoryl)serine.

The protein belongs to the DltC family. 4'-phosphopantetheine is transferred from CoA to a specific serine of apo-DCP.

The protein resides in the cytoplasm. Its pathway is cell wall biogenesis; lipoteichoic acid biosynthesis. Functionally, carrier protein involved in the D-alanylation of lipoteichoic acid (LTA). The loading of thioester-linked D-alanine onto DltC is catalyzed by D-alanine--D-alanyl carrier protein ligase DltA. The DltC-carried D-alanyl group is further transferred to cell membrane phosphatidylglycerol (PG) by forming an ester bond, probably catalyzed by DltD. D-alanylation of LTA plays an important role in modulating the properties of the cell wall in Gram-positive bacteria, influencing the net charge of the cell wall. This chain is D-alanyl carrier protein, found in Staphylococcus haemolyticus (strain JCSC1435).